A 331-amino-acid chain; its full sequence is Undecaprenyl-phosphate 4-deoxy-4-formamido-L-arabinose transferase (331 aa).

The next 2 membrane-spanning stretches (helical) occupy residues 236–256 (LSIVGGGIASFGILFGLFLIL) and 270–290 (VFPLFSILFIFIGAQFVGLGL).

The protein belongs to the glycosyltransferase 2 family.

The protein localises to the cell inner membrane. It catalyses the reaction UDP-4-deoxy-4-formamido-beta-L-arabinose + di-trans,octa-cis-undecaprenyl phosphate = 4-deoxy-4-formamido-alpha-L-arabinopyranosyl di-trans,octa-cis-undecaprenyl phosphate + UDP. It participates in glycolipid biosynthesis; 4-amino-4-deoxy-alpha-L-arabinose undecaprenyl phosphate biosynthesis; 4-amino-4-deoxy-alpha-L-arabinose undecaprenyl phosphate from UDP-4-deoxy-4-formamido-beta-L-arabinose and undecaprenyl phosphate: step 1/2. It functions in the pathway bacterial outer membrane biogenesis; lipopolysaccharide biosynthesis. Its function is as follows. Catalyzes the transfer of 4-deoxy-4-formamido-L-arabinose from UDP to undecaprenyl phosphate. The modified arabinose is attached to lipid A and is required for resistance to polymyxin and cationic antimicrobial peptides. In Shewanella sediminis (strain HAW-EB3), this protein is Undecaprenyl-phosphate 4-deoxy-4-formamido-L-arabinose transferase.